The following is a 493-amino-acid chain: UDP-N-acetylmuramoyl-L-alanyl-D-glutamate--2,6-diaminopimelate ligase (493 aa).

Residues leucine 30 and serine 32 each contribute to the UDP-N-acetyl-alpha-D-muramoyl-L-alanyl-D-glutamate site. Position 117–123 (glycine 117–threonine 123) interacts with ATP. Residues asparagine 158, threonine 159–threonine 160, serine 186, glutamine 192, and arginine 194 each bind UDP-N-acetyl-alpha-D-muramoyl-L-alanyl-D-glutamate. At lysine 226 the chain carries N6-carboxylysine. Meso-2,6-diaminopimelate-binding positions include arginine 388, aspartate 412 to arginine 415, glycine 463, and glutamate 467. Residues aspartate 412 to arginine 415 carry the Meso-diaminopimelate recognition motif motif.

This sequence belongs to the MurCDEF family. MurE subfamily. Mg(2+) is required as a cofactor. Carboxylation is probably crucial for Mg(2+) binding and, consequently, for the gamma-phosphate positioning of ATP.

It is found in the cytoplasm. It carries out the reaction UDP-N-acetyl-alpha-D-muramoyl-L-alanyl-D-glutamate + meso-2,6-diaminopimelate + ATP = UDP-N-acetyl-alpha-D-muramoyl-L-alanyl-gamma-D-glutamyl-meso-2,6-diaminopimelate + ADP + phosphate + H(+). Its pathway is cell wall biogenesis; peptidoglycan biosynthesis. Functionally, catalyzes the addition of meso-diaminopimelic acid to the nucleotide precursor UDP-N-acetylmuramoyl-L-alanyl-D-glutamate (UMAG) in the biosynthesis of bacterial cell-wall peptidoglycan. This Vibrio parahaemolyticus serotype O3:K6 (strain RIMD 2210633) protein is UDP-N-acetylmuramoyl-L-alanyl-D-glutamate--2,6-diaminopimelate ligase.